Reading from the N-terminus, the 235-residue chain is MKLFVGLGNPGPKYARNRHNIGFMALDQIAADHGFSPWRTKFSGQMAEGKFGSTKVTLLKPETFMNRSGQSVGEAMRFFKLEPEDVIVFHDELDLAPGKCRVKTGGGHAGHNGLRSIHGHIGPEYQRVRLGIGHPGHKDRVSGYVLSDFAKAEAAWLDDLLRGIGDGAPELAAGDTGRFMNAVSLRTAPPRSSGGSPKTDKPAKATREPPPAAKPEATPEEETRSPLQRLVDKFR.

Residue Tyr-14 coordinates tRNA. Catalysis depends on His-19, which acts as the Proton acceptor. Positions 64, 66, and 112 each coordinate tRNA. The interval Arg-186–Arg-235 is disordered. Over residues Lys-198–Arg-207 the composition is skewed to basic and acidic residues.

The protein belongs to the PTH family. As to quaternary structure, monomer.

It is found in the cytoplasm. It catalyses the reaction an N-acyl-L-alpha-aminoacyl-tRNA + H2O = an N-acyl-L-amino acid + a tRNA + H(+). Functionally, hydrolyzes ribosome-free peptidyl-tRNAs (with 1 or more amino acids incorporated), which drop off the ribosome during protein synthesis, or as a result of ribosome stalling. Catalyzes the release of premature peptidyl moieties from peptidyl-tRNA molecules trapped in stalled 50S ribosomal subunits, and thus maintains levels of free tRNAs and 50S ribosomes. This Dinoroseobacter shibae (strain DSM 16493 / NCIMB 14021 / DFL 12) protein is Peptidyl-tRNA hydrolase.